Reading from the N-terminus, the 490-residue chain is AP-5 complex subunit mu-1 (490 aa).

The MHD domain maps to K206–N476.

Belongs to the adaptor complexes medium subunit family. Probably part of the adaptor protein complex 5 (AP-5) a tetramer composed of AP5B1, AP5M1, AP5S1 and AP5Z1.

The protein resides in the cytoplasm. Its subcellular location is the cytosol. The protein localises to the late endosome membrane. It localises to the lysosome membrane. Functionally, as part of AP-5, a probable fifth adaptor protein complex it may be involved in endosomal transport. The sequence is that of AP-5 complex subunit mu-1 (AP5M1) from Bos taurus (Bovine).